The chain runs to 588 residues: NADP-dependent malic enzyme 2 (588 aa).

The disordered stretch occupies residues 1–21 (MGSTPTDLPGEDVADNRSGVG). G2 carries the N-acetylglycine modification. Y136 serves as the catalytic Proton donor. R189 lines the NADP(+) pocket. The Proton acceptor role is filled by K207. The a divalent metal cation site is built by E279, D280, and D303. Residues D303, 332-348 (LFLG…ELIA), and N444 each bind NADP(+).

Belongs to the malic enzymes family. Homohexamers and homooctamers. It depends on Mg(2+) as a cofactor. Mn(2+) is required as a cofactor. In terms of tissue distribution, expressed in leaves, stems, flowers and roots. Particularly present in vasculatures, trichome basal cells and hydatodes.

The protein resides in the cytoplasm. It carries out the reaction (S)-malate + NADP(+) = pyruvate + CO2 + NADPH. It catalyses the reaction oxaloacetate + H(+) = pyruvate + CO2. Activated by coenzyme A (CoA), aspartate, succinate and fumarate. Repressed by oxaloacetate, glucose and ATP. This Arabidopsis thaliana (Mouse-ear cress) protein is NADP-dependent malic enzyme 2 (NADP-ME2).